Reading from the N-terminus, the 305-residue chain is Tyrosine recombinase XerC (305 aa).

The region spanning 4 to 95 (TSIQALINKW…AVKNFYRFLE (92 aa)) is the Core-binding (CB) domain. The Tyr recombinase domain maps to 116–298 (LLPKALSEDD…SIKHLEAVYT (183 aa)). Active-site residues include R159, K182, H250, R253, and H276. Catalysis depends on Y285, which acts as the O-(3'-phospho-DNA)-tyrosine intermediate.

Belongs to the 'phage' integrase family. XerC subfamily. In terms of assembly, forms a cyclic heterotetrameric complex composed of two molecules of XerC and two molecules of XerD.

The protein localises to the cytoplasm. Site-specific tyrosine recombinase, which acts by catalyzing the cutting and rejoining of the recombining DNA molecules. The XerC-XerD complex is essential to convert dimers of the bacterial chromosome into monomers to permit their segregation at cell division. It also contributes to the segregational stability of plasmids. The chain is Tyrosine recombinase XerC from Rickettsia massiliae (strain Mtu5).